We begin with the raw amino-acid sequence, 424 residues long: Histone-binding protein RBBP7 (424 aa).

7 WD repeats span residues 47–121 (QWLP…KINH), 127–172 (RARY…LRLR), 180–216 (GLSW…KIVD), 227–268 (VVED…HSVD), 274–311 (VNCL…LHSF), 317–368 (EIFQ…LFIH), and 375–402 (ISDF…IWQM). Residues 359–404 (DGPPELLFIHGGHTAKISDFSWNPNEPWVICSVSEDNIMQIWQMAE) form an interaction with HAT1 region.

It belongs to the WD repeat RBAP46/RBAP48/MSI1 family. As to quaternary structure, binds directly to helix 1 of the histone fold of histone H4, a region that is not accessible when H4 is in chromatin. Also interacts with histone H2B and HAT1.

It localises to the nucleus. Its function is as follows. Core histone-binding subunit that may target chromatin remodeling factors, histone acetyltransferases and histone deacetylases to their histone substrates in a manner that is regulated by nucleosomal DNA. Component of several complexes which regulate chromatin metabolism. In Gallus gallus (Chicken), this protein is Histone-binding protein RBBP7 (RBBP7).